The primary structure comprises 756 residues: 5-methyltetrahydropteroyltriglutamate--homocysteine methyltransferase (756 aa).

5-methyltetrahydropteroyltri-L-glutamate-binding positions include 16 to 19 and lysine 112; that span reads RELK. Residues 432–434 and glutamate 485 each bind L-homocysteine; that span reads IGS. Residues 432–434 and glutamate 485 each bind L-methionine; that span reads IGS. Residues 516–517 and tryptophan 562 each bind 5-methyltetrahydropteroyltri-L-glutamate; that span reads RC. Aspartate 600 lines the L-homocysteine pocket. Aspartate 600 is an L-methionine binding site. A 5-methyltetrahydropteroyltri-L-glutamate-binding site is contributed by glutamate 606. Positions 642, 644, and 666 each coordinate Zn(2+). Histidine 695 (proton donor) is an active-site residue. Residue cysteine 727 coordinates Zn(2+).

This sequence belongs to the vitamin-B12 independent methionine synthase family. Zn(2+) serves as cofactor.

It catalyses the reaction 5-methyltetrahydropteroyltri-L-glutamate + L-homocysteine = tetrahydropteroyltri-L-glutamate + L-methionine. It participates in amino-acid biosynthesis; L-methionine biosynthesis via de novo pathway; L-methionine from L-homocysteine (MetE route): step 1/1. Functionally, catalyzes the transfer of a methyl group from 5-methyltetrahydrofolate to homocysteine resulting in methionine formation. The sequence is that of 5-methyltetrahydropteroyltriglutamate--homocysteine methyltransferase from Haemophilus influenzae (strain PittGG).